Consider the following 778-residue polypeptide: Lon protease (778 aa).

One can recognise a Lon N-terminal domain in the interval 6–207 (LPLMALRDMV…TVISMLNSNI (202 aa)). ATP is bound at residue 356-363 (GPPGVGKT). Residues 592–773 (EDQIGSTTGL…DQVLKHALVG (182 aa)) enclose the Lon proteolytic domain. Residues serine 679 and lysine 722 contribute to the active site.

This sequence belongs to the peptidase S16 family. As to quaternary structure, homohexamer. Organized in a ring with a central cavity.

The protein localises to the cytoplasm. The catalysed reaction is Hydrolysis of proteins in presence of ATP.. Functionally, ATP-dependent serine protease that mediates the selective degradation of mutant and abnormal proteins as well as certain short-lived regulatory proteins. Required for cellular homeostasis and for survival from DNA damage and developmental changes induced by stress. Degrades polypeptides processively to yield small peptide fragments that are 5 to 10 amino acids long. Binds to DNA in a double-stranded, site-specific manner. The sequence is that of Lon protease from Rickettsia conorii (strain ATCC VR-613 / Malish 7).